The following is a 190-amino-acid chain: Holliday junction branch migration complex subunit RuvA (190 aa).

A domain I region spans residues 1 to 64 (MIGKLTGTLL…EDAQLLYGFG (64 aa)). The tract at residues 65-137 (TAQERQAFRE…LKGKLGADVG (73 aa)) is domain II. A flexible linker region spans residues 137 to 141 (GVRAH). The segment at 142-190 (AANDNQADILQALLALGYNDKEAAAALKALPADVGVSEGIKLALKSLSK) is domain III.

Belongs to the RuvA family. In terms of assembly, homotetramer. Forms an RuvA(8)-RuvB(12)-Holliday junction (HJ) complex. HJ DNA is sandwiched between 2 RuvA tetramers; dsDNA enters through RuvA and exits via RuvB. An RuvB hexamer assembles on each DNA strand where it exits the tetramer. Each RuvB hexamer is contacted by two RuvA subunits (via domain III) on 2 adjacent RuvB subunits; this complex drives branch migration. In the full resolvosome a probable DNA-RuvA(4)-RuvB(12)-RuvC(2) complex forms which resolves the HJ.

Its subcellular location is the cytoplasm. In terms of biological role, the RuvA-RuvB-RuvC complex processes Holliday junction (HJ) DNA during genetic recombination and DNA repair, while the RuvA-RuvB complex plays an important role in the rescue of blocked DNA replication forks via replication fork reversal (RFR). RuvA specifically binds to HJ cruciform DNA, conferring on it an open structure. The RuvB hexamer acts as an ATP-dependent pump, pulling dsDNA into and through the RuvAB complex. HJ branch migration allows RuvC to scan DNA until it finds its consensus sequence, where it cleaves and resolves the cruciform DNA. The protein is Holliday junction branch migration complex subunit RuvA of Acidovorax ebreus (strain TPSY) (Diaphorobacter sp. (strain TPSY)).